An 83-amino-acid chain; its full sequence is Small ribosomal subunit protein uS17 (83 aa).

This sequence belongs to the universal ribosomal protein uS17 family. Part of the 30S ribosomal subunit.

In terms of biological role, one of the primary rRNA binding proteins, it binds specifically to the 5'-end of 16S ribosomal RNA. This is Small ribosomal subunit protein uS17 from Zymomonas mobilis subsp. mobilis (strain ATCC 31821 / ZM4 / CP4).